The primary structure comprises 355 residues: Phenylalanine--tRNA ligase alpha subunit (355 aa).

E273 is a binding site for Mg(2+).

This sequence belongs to the class-II aminoacyl-tRNA synthetase family. Phe-tRNA synthetase alpha subunit type 1 subfamily. As to quaternary structure, tetramer of two alpha and two beta subunits. Mg(2+) is required as a cofactor.

It localises to the cytoplasm. It catalyses the reaction tRNA(Phe) + L-phenylalanine + ATP = L-phenylalanyl-tRNA(Phe) + AMP + diphosphate + H(+). The polypeptide is Phenylalanine--tRNA ligase alpha subunit (Bifidobacterium longum (strain NCC 2705)).